Reading from the N-terminus, the 911-residue chain is Translation initiation factor IF-2 (911 aa).

Basic and acidic residues-rich tracts occupy residues 80–94 (LEEQ…EQQL) and 101–113 (RPER…RTEV). 3 disordered regions span residues 80-142 (LEEQ…VSEP), 153-172 (VKSP…DVEG), and 195-309 (SSLG…KMRK). The segment covering 214-256 (KEQADELKDEFDIKAKEGGKEREAGGESRKPVKKGSEETKKTT) has biased composition (basic and acidic residues). The segment covering 262–272 (AKKKKGKKKKK) has biased composition (basic residues). The segment covering 273-284 (PEVDEKTIEKNI) has biased composition (basic and acidic residues). The segment covering 286–300 (STISGMDDTSGSGSS) has biased composition (low complexity). One can recognise a tr-type G domain in the interval 408 to 578 (IRPPVVTIMG…LTEAEIRELK (171 aa)). Residues 417–424 (GHVDHGKT) are G1. 417-424 (GHVDHGKT) is a GTP binding site. A G2 region spans residues 442-446 (GITQH). The tract at residues 464–467 (DTPG) is G3. Residues 464 to 468 (DTPGH) and 518 to 521 (NKID) contribute to the GTP site. The tract at residues 518-521 (NKID) is G4. The G5 stretch occupies residues 554 to 556 (SAK).

This sequence belongs to the TRAFAC class translation factor GTPase superfamily. Classic translation factor GTPase family. IF-2 subfamily.

It is found in the cytoplasm. Its function is as follows. One of the essential components for the initiation of protein synthesis. Protects formylmethionyl-tRNA from spontaneous hydrolysis and promotes its binding to the 30S ribosomal subunits. Also involved in the hydrolysis of GTP during the formation of the 70S ribosomal complex. The protein is Translation initiation factor IF-2 of Chlorobium phaeobacteroides (strain BS1).